The primary structure comprises 702 residues: 1,4-alpha-glucan-branching enzyme (702 aa).

At Ala2 the chain carries N-acetylalanine. Residues 62–63 and 91–93 contribute to the substrate site; these read NE and WAP. A (1,4-alpha-D-glucosyl)n-binding site is contributed by Trp107. 118 to 121 contacts substrate; that stretch reads EYGK. Residue Lys143 coordinates (1,4-alpha-D-glucosyl)n. Tyr173 carries the phosphotyrosine modification. 333–336 is a substrate binding site; sequence EVLR. The active-site Nucleophile is Asp357. Catalysis depends on Glu412, which acts as the Proton donor.

The protein belongs to the glycosyl hydrolase 13 family. GlgB subfamily. In terms of assembly, monomer.

It catalyses the reaction Transfers a segment of a (1-&gt;4)-alpha-D-glucan chain to a primary hydroxy group in a similar glucan chain.. It functions in the pathway glycan biosynthesis; glycogen biosynthesis. Functionally, glycogen-branching enzyme participates in the glycogen biosynthetic process along with glycogenin and glycogen synthase. Generates alpha-1,6-glucosidic branches from alpha-1,4-linked glucose chains, to increase solubility of the glycogen polymer. This is 1,4-alpha-glucan-branching enzyme (Gbe1) from Mus musculus (Mouse).